A 116-amino-acid chain; its full sequence is Ribonuclease P protein component (116 aa).

This sequence belongs to the RnpA family. In terms of assembly, consists of a catalytic RNA component (M1 or rnpB) and a protein subunit.

The catalysed reaction is Endonucleolytic cleavage of RNA, removing 5'-extranucleotides from tRNA precursor.. In terms of biological role, RNaseP catalyzes the removal of the 5'-leader sequence from pre-tRNA to produce the mature 5'-terminus. It can also cleave other RNA substrates such as 4.5S RNA. The protein component plays an auxiliary but essential role in vivo by binding to the 5'-leader sequence and broadening the substrate specificity of the ribozyme. The sequence is that of Ribonuclease P protein component from Citrifermentans bemidjiense (strain ATCC BAA-1014 / DSM 16622 / JCM 12645 / Bem) (Geobacter bemidjiensis).